A 330-amino-acid chain; its full sequence is Aspartate--ammonia ligase (330 aa).

This sequence belongs to the class-II aminoacyl-tRNA synthetase family. AsnA subfamily.

It localises to the cytoplasm. It carries out the reaction L-aspartate + NH4(+) + ATP = L-asparagine + AMP + diphosphate + H(+). It participates in amino-acid biosynthesis; L-asparagine biosynthesis; L-asparagine from L-aspartate (ammonia route): step 1/1. This chain is Aspartate--ammonia ligase, found in Photorhabdus laumondii subsp. laumondii (strain DSM 15139 / CIP 105565 / TT01) (Photorhabdus luminescens subsp. laumondii).